The sequence spans 132 residues: MNDTVTIRTRKFMTNRLLQRKQMVIDVLHPGKATVPKTEIREKLAKMYKTTPDVIFVFGFRTHFGGGKTTGFGMIYDSLDYAKKNEPKHRLAKHGLYEKKKTSRKQRKERKNRMKKVRGTAKANVGAGKKKD.

A compositionally biased stretch (basic and acidic residues) spans 90–100 (RLAKHGLYEKK). A disordered region spans residues 90–132 (RLAKHGLYEKKKTSRKQRKERKNRMKKVRGTAKANVGAGKKKD). The segment covering 101-119 (KTSRKQRKERKNRMKKVRG) has biased composition (basic residues).

It belongs to the eukaryotic ribosomal protein eS24 family. In terms of assembly, component of the small ribosomal subunit. Part of the small subunit (SSU) processome, composed of more than 70 proteins and the RNA chaperone small nucleolar RNA (snoRNA) U3.

It localises to the cytoplasm. The protein resides in the nucleus. Its subcellular location is the nucleolus. In terms of biological role, component of the small ribosomal subunit. The ribosome is a large ribonucleoprotein complex responsible for the synthesis of proteins in the cell. Required for processing of pre-rRNA and maturation of 40S ribosomal subunits. Part of the small subunit (SSU) processome, first precursor of the small eukaryotic ribosomal subunit. During the assembly of the SSU processome in the nucleolus, many ribosome biogenesis factors, an RNA chaperone and ribosomal proteins associate with the nascent pre-rRNA and work in concert to generate RNA folding, modifications, rearrangements and cleavage as well as targeted degradation of pre-ribosomal RNA by the RNA exosome. This is Small ribosomal subunit protein eS24 (rps24) from Xenopus laevis (African clawed frog).